Here is a 216-residue protein sequence, read N- to C-terminus: Probable nicotinate-nucleotide adenylyltransferase (216 aa).

It belongs to the NadD family.

The catalysed reaction is nicotinate beta-D-ribonucleotide + ATP + H(+) = deamido-NAD(+) + diphosphate. It functions in the pathway cofactor biosynthesis; NAD(+) biosynthesis; deamido-NAD(+) from nicotinate D-ribonucleotide: step 1/1. Functionally, catalyzes the reversible adenylation of nicotinate mononucleotide (NaMN) to nicotinic acid adenine dinucleotide (NaAD). The sequence is that of Probable nicotinate-nucleotide adenylyltransferase from Shewanella baltica (strain OS223).